A 413-amino-acid polypeptide reads, in one-letter code: Tyrosine--tRNA ligase (413 aa).

Tyr34 provides a ligand contact to L-tyrosine. Positions 39 to 48 match the 'HIGH' region motif; the sequence is CTAQSLHVGN. Residues Tyr171 and Gln175 each contribute to the L-tyrosine site. Positions 231–235 match the 'KMSKS' region motif; the sequence is KMGKT. Lys234 provides a ligand contact to ATP. Positions 346–411 constitute an S4 RNA-binding domain; that stretch reads IPITELLVTI…GKKCHILVKI (66 aa).

This sequence belongs to the class-I aminoacyl-tRNA synthetase family. TyrS type 1 subfamily. Homodimer.

The protein localises to the cytoplasm. It catalyses the reaction tRNA(Tyr) + L-tyrosine + ATP = L-tyrosyl-tRNA(Tyr) + AMP + diphosphate + H(+). In terms of biological role, catalyzes the attachment of tyrosine to tRNA(Tyr) in a two-step reaction: tyrosine is first activated by ATP to form Tyr-AMP and then transferred to the acceptor end of tRNA(Tyr). The sequence is that of Tyrosine--tRNA ligase from Orientia tsutsugamushi (strain Boryong) (Rickettsia tsutsugamushi).